The chain runs to 326 residues: Pyruvate dehydrogenase E1 component subunit beta (326 aa).

Glutamate 59 serves as a coordination point for thiamine diphosphate.

Heterodimer of an alpha and a beta chain. Thiamine diphosphate is required as a cofactor.

The enzyme catalyses N(6)-[(R)-lipoyl]-L-lysyl-[protein] + pyruvate + H(+) = N(6)-[(R)-S(8)-acetyldihydrolipoyl]-L-lysyl-[protein] + CO2. In terms of biological role, the pyruvate dehydrogenase complex catalyzes the overall conversion of pyruvate to acetyl-CoA and CO(2). It contains multiple copies of three enzymatic components: pyruvate dehydrogenase (E1), dihydrolipoamide acetyltransferase (E2) and lipoamide dehydrogenase (E3). This Rickettsia felis (strain ATCC VR-1525 / URRWXCal2) (Rickettsia azadi) protein is Pyruvate dehydrogenase E1 component subunit beta (pdhB).